Consider the following 1456-residue polypeptide: Sterol 3-beta-glucosyltransferase (1456 aa).

Basic and acidic residues predominate over residues 1 to 12; the sequence is MASQDRGSDRTS. A disordered region spans residues 1–229; sequence MASQDRGSDR…RSPAAAATGE (229 aa). Over residues 13-22 the composition is skewed to basic residues; the sequence is RRLTKKRKDG. Basic and acidic residues predominate over residues 23 to 48; sequence KKPMRDVSLDMPERFKDGDDAHEDVT. 2 stretches are compositionally biased toward polar residues: residues 54–63 and 109–123; these read HTMSMNQSIF and RLST…SGQT. One can recognise a GRAM 1 domain in the interval 236–283; sequence KRIQHIFEFAQEEEVISEYPCWLLQSILLQGYMYITQKHICFYAYIPK. Residues 287–384 enclose the PH domain; sequence DVSKTGYLSK…WVKSIQKVIF (98 aa). 2 disordered regions span residues 500-612 and 631-691; these read LSPL…TASA and NAFS…TRLS. Over residues 510-523 the composition is skewed to low complexity; it reads RSSMSDISVRSSVD. 3 stretches are compositionally biased toward basic and acidic residues: residues 524–536, 544–557, and 571–584; these read ANRK…RSMD, WSLE…EAHR, and RVGD…RATD. Composition is skewed to polar residues over residues 585 to 612 and 631 to 650; these read SDSA…TASA and NAFS…TRSS. Residues 774–840 form the GRAM 2 domain; sequence DNFREHFAFR…KDIENVNKEK (67 aa). UDP-alpha-D-glucose contacts are provided by serine 966, arginine 967, aspartate 969, alanine 1269, histidine 1271, histidine 1284, serine 1287, glycine 1288, threonine 1289, aspartate 1308, and glutamine 1309.

The protein belongs to the glycosyltransferase 28 family.

It is found in the cytoplasm. The protein localises to the preautophagosomal structure membrane. The catalysed reaction is a sterol + UDP-alpha-D-glucose = a sterol 3-beta-D-glucoside + UDP + H(+). It catalyses the reaction ergosterol + UDP-alpha-D-glucose = ergosteryl 3-beta-D-glucoside + UDP + H(+). Its function is as follows. Sterol glycosyltransferase responsible for the glycosylation of ergosterol to form ergosterol-glucoside. This is Sterol 3-beta-glucosyltransferase from Leptosphaeria maculans (Blackleg fungus).